The primary structure comprises 383 residues: uncharacterized protein (383 aa).

Belongs to the peptidase M20 family.

This is an uncharacterized protein from Staphylococcus haemolyticus (strain JCSC1435).